The following is a 657-amino-acid chain: Glycogen debranching enzyme (657 aa).

Residue Asp-336 is the Nucleophile of the active site. Catalysis depends on Glu-371, which acts as the Proton donor. Positions 458-467 (NEANGEENRD) are enriched in basic and acidic residues. Residues 458-479 (NEANGEENRDGTNNNYSNNHGK) form a disordered region.

The protein belongs to the glycosyl hydrolase 13 family.

The enzyme catalyses Hydrolysis of (1-&gt;6)-alpha-D-glucosidic linkages to branches with degrees of polymerization of three or four glucose residues in limit dextrin.. It participates in glycan degradation; glycogen degradation. In terms of biological role, removes maltotriose and maltotetraose chains that are attached by 1,6-alpha-linkage to the limit dextrin main chain, generating a debranched limit dextrin. The polypeptide is Glycogen debranching enzyme (Shigella boydii serotype 18 (strain CDC 3083-94 / BS512)).